Reading from the N-terminus, the 261-residue chain is Transmembrane and immunoglobulin domain-containing protein 1 (261 aa).

A signal peptide spans 1–27 (MAQKTSGLIQRCRFLLLMILFLPHVMT). The 87-residue stretch at 28–114 (SSVLSVNGKT…LQRNQSVSIS (87 aa)) folds into the Ig-like C2-type 1 domain. The Extracellular segment spans residues 28–219 (SSVLSVNGKT…IVKDKGSTVP (192 aa)). Residues Cys54 and Cys103 are joined by a disulfide bond. N-linked (GlcNAc...) asparagine glycans are attached at residues Asn83, Asn108, Asn118, and Asn189. Residues 122–208 (PPLLSGNDFQ…LIETKTKDFH (87 aa)) enclose the Ig-like C2-type 2 domain. A disulfide bridge connects residues Cys143 and Cys194. The chain crosses the membrane as a helical span at residues 220-240 (IEPIIAACVVVFLTLVFGVIA). Over 241–261 (RRKRIMKLCRKDQGPQCRTAL) the chain is Cytoplasmic.

As to quaternary structure, homodimer. Post-translationally, N-glycosylated.

It is found in the cell membrane. It localises to the cytoplasm. In terms of biological role, may control cell-cell adhesion, cell migration and proliferation, cell morphology, and protects renal epithelial cells from oxidative cell injury to promote cell survival. The protein is Transmembrane and immunoglobulin domain-containing protein 1 of Bos taurus (Bovine).